The primary structure comprises 573 residues: Acetolactate synthase large subunit (573 aa).

Residue Glu51 participates in thiamine diphosphate binding. FAD is bound by residues Arg153, 261 to 282 (HGTLEANTAMHESDLILGIGVR), and 304 to 323 (DIDPTSISKNVPVAIPIVGN). Residues 396 to 476 (QHQMFAALHY…VVIICLNNHF (81 aa)) form a thiamine pyrophosphate binding region. Residues Asp447 and Asn474 each coordinate Mg(2+).

This sequence belongs to the TPP enzyme family. In terms of assembly, dimer of large and small chains. Mg(2+) serves as cofactor. Requires thiamine diphosphate as cofactor.

The enzyme catalyses 2 pyruvate + H(+) = (2S)-2-acetolactate + CO2. It participates in amino-acid biosynthesis; L-isoleucine biosynthesis; L-isoleucine from 2-oxobutanoate: step 1/4. The protein operates within amino-acid biosynthesis; L-valine biosynthesis; L-valine from pyruvate: step 1/4. In Haemophilus influenzae (strain ATCC 51907 / DSM 11121 / KW20 / Rd), this protein is Acetolactate synthase large subunit (ilvI).